Consider the following 186-residue polypeptide: Interferon beta-2 (186 aa).

A signal peptide spans 1–21 (MTHRCLLQMVLLLCFSTTALS). Cysteines 52 and 161 form a disulfide. N-linked (GlcNAc...) asparagine glycosylation is found at Asn-131 and Asn-173.

It belongs to the alpha/beta interferon family. In terms of assembly, monomer.

Its subcellular location is the secreted. Has antiviral, antibacterial and anticancer activities. This is Interferon beta-2 (IFNB2) from Bos taurus (Bovine).